The primary structure comprises 197 residues: Holliday junction resolvase RecU (197 aa).

The segment at 1 to 21 (MVNYPSGVRAGGYPQKKKNQN) is disordered. Positions 82, 84, 97, and 116 each coordinate Mg(2+).

The protein belongs to the RecU family. Mg(2+) serves as cofactor.

It is found in the cytoplasm. It carries out the reaction Endonucleolytic cleavage at a junction such as a reciprocal single-stranded crossover between two homologous DNA duplexes (Holliday junction).. Its function is as follows. Endonuclease that resolves Holliday junction intermediates in genetic recombination. Cleaves mobile four-strand junctions by introducing symmetrical nicks in paired strands. Promotes annealing of linear ssDNA with homologous dsDNA. Required for DNA repair, homologous recombination and chromosome segregation. This chain is Holliday junction resolvase RecU, found in Oenococcus oeni (strain ATCC BAA-331 / PSU-1).